A 564-amino-acid polypeptide reads, in one-letter code: MSPAATETERWCVVTGGRGFAARHLVEMLVRYEMFCVRIADLAPAIMLDPQEGNGVLDEGLRSGRVQYISADLRDKSQVVKAFQGAEVVFHMAAPDSSINNHQLQYSVNVQGTQNVIDACVDVGVKRLIYTSSPSVVFDGVHGILNGTESMAYPIKHNDSYSATKAEGEELIMKANGRNGLLTCCIRPSSIFGPGDRLLVPSLVAAARAGKSKFIIGDGNNLYDFTYVENVAHAHVCAERALASGGDVSTKAAGQAYFITNMEPIKFWEFMSQLLDGLGYERPSIKIPAFIMMPIAHLVELTYKVLGPYGMTVPQLTPSRVRLLSCSRTFDSTKAKDRLGYAPVVPLQEGIRRTIDSFSHLTAGSQSKREGPSKASRILGGGKVADTLLWKDLKQTLIAIFILISIYYNFVATGSTVVTALSKALLVASVFLFLHGILPEKIFGYTVEKIPASQFHLSKDSSHDLSLSVISSWNTTVKALRSLCQGNDWSFFFKVVFVLLALSLAGAISLHSIFVIGLPIAFLAFLVYEKKEQEIDSIVVSFKSFACKHKSDVYEKLFGSKKHD.

16-21 (GGRGFA) is an NAD(+) binding site. N-linked (GlcNAc...) asparagine glycosylation is found at Asn146 and Asn158. NAD(+) is bound by residues Tyr161 and Lys165. Lys165 serves as the catalytic Proton donor. The 181-residue stretch at 384–564 (VADTLLWKDL…EKLFGSKKHD (181 aa)) folds into the Reticulon domain. A run of 2 helical transmembrane segments spans residues 398–418 (IAIFILISIYYNFVATGSTVV) and 424–444 (ALLVASVFLFLHGILPEKIFG). Asn474 carries N-linked (GlcNAc...) asparagine glycosylation. 2 helical membrane passes run 486-506 (GNDWSFFFKVVFVLLALSLAG) and 507-527 (AISLHSIFVIGLPIAFLAFLV).

This sequence belongs to the 3-beta-HSD family.

It localises to the endoplasmic reticulum membrane. The enzyme catalyses a 3beta-hydroxysteroid-4alpha-carboxylate + NAD(+) = a 3-oxosteroid + CO2 + NADH. The catalysed reaction is 4alpha-carboxy-4beta,14alpha-dimethyl-9beta,19-cyclo-5alpha-ergost-24(24(1))-en-3beta-ol + NAD(+) = cycloeucalenone + CO2 + NADH. The protein operates within steroid biosynthesis; zymosterol biosynthesis; zymosterol from lanosterol: step 4/6. Its function is as follows. 3beta-hydroxysteroid-dehydrogenase/decarboxylase involved in sterol synthesis. Catalyzes the formation of 3-oxosteroids from 3beta-hydroxysteroids-4alpha-carboxylate. Involved in the regulation of inflorescence internodes and leaves growth, probably by affecting auxin transporter activity possibly by altering sterol composition in the membranes. This is 3beta-hydroxysteroid-dehydrogenase/decarboxylase isoform 2 from Arabidopsis thaliana (Mouse-ear cress).